Consider the following 354-residue polypeptide: GTPase Obg (354 aa).

One can recognise an Obg domain in the interval 1–159; the sequence is MKYIDEAIIH…ADLKLELKVL (159 aa). In terms of domain architecture, OBG-type G spans 160 to 334; that stretch reads ADVGLLGMPN…LTYAIMEFLE (175 aa). GTP-binding positions include 166 to 173, 191 to 195, 213 to 216, 284 to 287, and 315 to 317; these read GMPNAGKS, FTTMH, DIPG, NKVD, and SAM. The Mg(2+) site is built by serine 173 and threonine 193.

It belongs to the TRAFAC class OBG-HflX-like GTPase superfamily. OBG GTPase family. Monomer. It depends on Mg(2+) as a cofactor.

The protein resides in the cytoplasm. An essential GTPase which binds GTP, GDP and possibly (p)ppGpp with moderate affinity, with high nucleotide exchange rates and a fairly low GTP hydrolysis rate. Plays a role in control of the cell cycle, stress response, ribosome biogenesis and in those bacteria that undergo differentiation, in morphogenesis control. The polypeptide is GTPase Obg (Nitrosospira multiformis (strain ATCC 25196 / NCIMB 11849 / C 71)).